The chain runs to 257 residues: Global transcriptional regulator CodY (257 aa).

The segment at 1–155 (MSLLSKTREL…AATVIGMEIL (155 aa)) is GAF domain. Positions 203–222 (ASKVADRVGITRSVIVNALR) form a DNA-binding region, H-T-H motif.

Belongs to the CodY family.

The protein localises to the cytoplasm. In terms of biological role, DNA-binding global transcriptional regulator which is involved in the adaptive response to starvation and acts by directly or indirectly controlling the expression of numerous genes in response to nutrient availability. During rapid exponential growth, CodY is highly active and represses genes whose products allow adaptation to nutrient depletion. This Staphylococcus saprophyticus subsp. saprophyticus (strain ATCC 15305 / DSM 20229 / NCIMB 8711 / NCTC 7292 / S-41) protein is Global transcriptional regulator CodY.